The following is a 500-amino-acid chain: AMP phosphorylase (500 aa).

Residues Gly-166, 192-197 (SRAVTS), and Thr-201 each bind AMP. Asp-254 functions as the Proton donor in the catalytic mechanism. Residues Ser-262 and Lys-286 each coordinate AMP.

It belongs to the thymidine/pyrimidine-nucleoside phosphorylase family. Type 2 subfamily.

The catalysed reaction is AMP + phosphate = alpha-D-ribose 1,5-bisphosphate + adenine. It carries out the reaction CMP + phosphate = cytosine + alpha-D-ribose 1,5-bisphosphate. The enzyme catalyses UMP + phosphate = alpha-D-ribose 1,5-bisphosphate + uracil. In terms of biological role, catalyzes the conversion of AMP and phosphate to adenine and ribose 1,5-bisphosphate (R15P). Exhibits phosphorylase activity toward CMP and UMP in addition to AMP. Functions in an archaeal AMP degradation pathway, together with R15P isomerase and RubisCO. The polypeptide is AMP phosphorylase (deoA) (Natronomonas pharaonis (strain ATCC 35678 / DSM 2160 / CIP 103997 / JCM 8858 / NBRC 14720 / NCIMB 2260 / Gabara) (Halobacterium pharaonis)).